The primary structure comprises 507 residues: Maturase K (507 aa).

This sequence belongs to the intron maturase 2 family. MatK subfamily.

Its subcellular location is the plastid. The protein resides in the chloroplast. Functionally, usually encoded in the trnK tRNA gene intron. Probably assists in splicing its own and other chloroplast group II introns. This chain is Maturase K, found in Cananga odorata (Ylang-ylang tree).